Reading from the N-terminus, the 190-residue chain is NADH-quinone oxidoreductase subunit C (190 aa).

It belongs to the complex I 30 kDa subunit family. NDH-1 is composed of 14 different subunits. Subunits NuoB, C, D, E, F, and G constitute the peripheral sector of the complex.

It localises to the cell membrane. It carries out the reaction a quinone + NADH + 5 H(+)(in) = a quinol + NAD(+) + 4 H(+)(out). Functionally, NDH-1 shuttles electrons from NADH, via FMN and iron-sulfur (Fe-S) centers, to quinones in the respiratory chain. The immediate electron acceptor for the enzyme in this species is believed to be ubiquinone. Couples the redox reaction to proton translocation (for every two electrons transferred, four hydrogen ions are translocated across the cytoplasmic membrane), and thus conserves the redox energy in a proton gradient. This Wolbachia sp. subsp. Brugia malayi (strain TRS) protein is NADH-quinone oxidoreductase subunit C.